A 652-amino-acid chain; its full sequence is DNA ligase (652 aa).

Residues 29–33 (DAEYD), 78–79 (SL), and Glu-107 contribute to the NAD(+) site. Catalysis depends on Lys-109, which acts as the N6-AMP-lysine intermediate. The NAD(+) site is built by Arg-130, Glu-164, Lys-278, and Lys-302. Zn(2+)-binding residues include Cys-395, Cys-398, Cys-413, and Cys-418. The 76-residue stretch at 577–652 (TDDAILSGKT…VKDEAWLLDL (76 aa)) folds into the BRCT domain.

The protein belongs to the NAD-dependent DNA ligase family. LigA subfamily. Mg(2+) serves as cofactor. Mn(2+) is required as a cofactor.

The catalysed reaction is NAD(+) + (deoxyribonucleotide)n-3'-hydroxyl + 5'-phospho-(deoxyribonucleotide)m = (deoxyribonucleotide)n+m + AMP + beta-nicotinamide D-nucleotide.. In terms of biological role, DNA ligase that catalyzes the formation of phosphodiester linkages between 5'-phosphoryl and 3'-hydroxyl groups in double-stranded DNA using NAD as a coenzyme and as the energy source for the reaction. It is essential for DNA replication and repair of damaged DNA. In Streptococcus thermophilus (strain ATCC BAA-491 / LMD-9), this protein is DNA ligase.